Reading from the N-terminus, the 144-residue chain is Maximins 10/H3 (144 aa).

The first 18 residues, 1-18 (MNFKYIVAVSFLIASAYA), serve as a signal peptide directing secretion. Residues 19 to 43 (RSVKNDEQSLSQRDVLDEESLREFR) constitute a propeptide that is removed on maturation. Serine amide is present on serine 70. Positions 74-123 (TAEDHEVMKRLEAVMRDLDSLDYPEEATERETRGFNQEEIANLFTKKEKR) are excised as a propeptide. Residue isoleucine 143 is modified to Isoleucine amide.

This sequence belongs to the bombinin family. As to expression, expressed by the skin glands.

It is found in the secreted. Its function is as follows. Maximin-10 shows antimicrobial activity against bacteria and against the fungus C.albicans. It has little hemolytic activity. Functionally, maximin-H3 shows antibacterial activity against both Gram-positive and Gram-negative bacteria. It also shows antimicrobial activity against the fungus C.albicans. Shows strong hemolytic activity. The chain is Maximins 10/H3 from Bombina maxima (Giant fire-bellied toad).